Consider the following 344-residue polypeptide: MTQKLTITRPDDWHLHLRDGAALAAVLPDTARQFGRAIIMPNLKPPVTTVEQAQAYRARILAALPAGMSFEPLMTLYLTDNTPAEEIVAAKASGFVHGVKLYPAGATTNSDAGVTDIRRCAGALEAMQRVGLPLLVHGEVTDGDIDIFDREAVFIDRVMTPLRRDFPELKVVFEHITTRDAAQYVRDASGPVGATITAHHLLYNRNAIFTGGIRPHYYCLPVLKRETHREALVAAATSGSDRFFLGTDSAPHARGLKEHACGCAGCYTALHAMELYAEAFDAAGALDKLEAFASFNGPAFYGLPRNTGTLTLEREDWQLPAELPYGDATLVPLRAGETLRWKAR.

The Zn(2+) site is built by His-14 and His-16. Substrate is bound by residues 16–18 (HLR) and Asn-42. Positions 100, 137, and 175 each coordinate Zn(2+). Lys-100 bears the N6-carboxylysine mark. His-137 lines the substrate pocket. Leu-220 lines the substrate pocket. A Zn(2+)-binding site is contributed by Asp-248. The active site involves Asp-248. Substrate is bound by residues His-252 and Ala-264.

This sequence belongs to the metallo-dependent hydrolases superfamily. DHOase family. Class II DHOase subfamily. In terms of assembly, homodimer. Requires Zn(2+) as cofactor.

It carries out the reaction (S)-dihydroorotate + H2O = N-carbamoyl-L-aspartate + H(+). The protein operates within pyrimidine metabolism; UMP biosynthesis via de novo pathway; (S)-dihydroorotate from bicarbonate: step 3/3. Functionally, catalyzes the reversible cyclization of carbamoyl aspartate to dihydroorotate. The chain is Dihydroorotase from Cupriavidus pinatubonensis (strain JMP 134 / LMG 1197) (Cupriavidus necator (strain JMP 134)).